We begin with the raw amino-acid sequence, 327 residues long: Aldo-keto reductase FVEG_12638 (327 aa).

Asp-51 is an NADP(+) binding site. The active-site Proton donor is Tyr-56. His-122 is a substrate binding site. NADP(+) is bound by residues 152-153, 202-212, and 286-294; these read SE, GPLGHGWLVED, and ENFTSRDIE.

Belongs to the aldo/keto reductase family. Aldo/keto reductase 2 subfamily.

Aldo-keto reductase; part of the Fusarium detoxification of benzoxazolinone cluster 2 (FDB2) involved in the degradation of benzoxazolinones produced by the host plant. Maize, wheat, and rye produce the 2 benzoxazinone phytoanticipins 2,4-dihy-droxy-7-methoxy-1,4-benzoxazin-3-one (DIMBOA) and 2,4-dihydroxy-1,4-benzoxazin-3-one (DIBOA) that, due to their inherent instability once released, spontaneously degrade to the more stable corresponding benzoxazolinones, 6-methoxy-2-benzoxazolinone (MBOA) and 2-benzoxazolinone (BOA), respectively. The first step in the detoxification of benzoxazolinones involves the hydrolysis of the cyclic ester bond of benzoxazolinones by the FDB1 cluster gamma-lactamase MBL1 to aminophenols. MBL1 is able to convert BOA into 2-aminophenol (2-AP), as well as MBOA into 5-methoxy-2-aminophenol (2-AMP). The FDB2 cluster N-malonyltransferase FDB2/NAT1 then metabolizes aminophenols via N-malonylation to non-toxic malonamic acids. FDB2/NAT1 converts 2-AP into N-(2-hydroxyphenyl) malonamic acid (HPMA) and 2-AMP into N-(2-hydroxy-4-methoxyphenyl) malonamic acid (HMPMA). The duplicated dienlactone hydrolases DLH1 and DLH2 may provide redundant function for hydrolyzing the lactone moiety in the BOA molecule. The roles of the amidases an other enzymes encoded by the 2 FDB clusters have not been identified so far. The chain is Aldo-keto reductase FVEG_12638 from Gibberella moniliformis (strain M3125 / FGSC 7600) (Maize ear and stalk rot fungus).